Reading from the N-terminus, the 481-residue chain is Putative amino-acid transporter CPE0389 (481 aa).

A run of 13 helical transmembrane segments spans residues 7-27, 36-56, 87-107, 127-147, 156-176, 208-228, 241-261, 289-309, 338-358, 364-384, 401-421, 422-442, and 461-481; these read LGVI…GVYN, ASAG…WFIA, FLMA…YAVL, LSIA…LAGV, IGTI…LFSF, STML…VVSG, FLGF…PLGV, VIMN…WTVM, FSLL…HFAG, MLSI…LYLF, RKYA…LIYA, AGIN…PVFI, and YFAI…FKFM.

It belongs to the amino acid-polyamine-organocation (APC) superfamily. Basic amino acid/polyamine antiporter (APA) (TC 2.A.3.2) family.

It is found in the cell membrane. In terms of biological role, could be an amino acid transporter. The sequence is that of Putative amino-acid transporter CPE0389 from Clostridium perfringens (strain 13 / Type A).